Reading from the N-terminus, the 382-residue chain is uncharacterized protein (382 aa).

The next 12 membrane-spanning stretches (helical) occupy residues 14–34 (GLLLLTLAIAVLNTLVPLWLA), 45–65 (VVSSSYFTGNLVGTLLTGYVI), 75–95 (YLASFIFAAGCAGLGLMIGFW), 102–122 (FVAGVGCAMIWVVVESALMCS), 131–151 (LLAAYMMVYYVGTFLGQLLVS), 157–177 (LMSVLPWVTGLTLAGILPLLF), 206–226 (VNGCIISGIVLGSLYGLMPLF), 235–255 (ASIGFWMAVLVSAGILGQWPI), 270–290 (VQVFVVILGSIAMLSQAAMAP), 291–311 (ALFILGAAGFTLYPVAMAWAC), 325–345 (ALLLSYTVGSLLGPSFTAMLM), and 348–368 (FSDNLLFIMIASVSFIYLLML).

It belongs to the major facilitator superfamily. YcaD (TC 2.A.1.26) family.

The protein resides in the cell inner membrane. This is an uncharacterized protein from Escherichia coli O17:K52:H18 (strain UMN026 / ExPEC).